We begin with the raw amino-acid sequence, 117 residues long: Ig heavy chain V region 186-1 (117 aa).

The signal sequence occupies residues 1-19; the sequence is MGWSCIMLFLAATATGVHS. The tract at residues 20–49 is framework-1; the sequence is QVQLQQPGAELVKPGASVKLSCKASGYTFT. Cysteine 41 and cysteine 115 are disulfide-bonded. A complementarity-determining-1 region spans residues 50-54; it reads SYWMH. A framework-2 region spans residues 55–68; sequence WVKQRPGRGLEWIG. A complementarity-determining-2 region spans residues 69–85; the sequence is RIDPNSGGTKYNEKFKS. The segment at 86–117 is framework-3; sequence KATLTVDTSSSTAYMQLHSLTSEDSAVYYCAR.

This chain is Ig heavy chain V region 186-1, found in Mus musculus (Mouse).